A 253-amino-acid polypeptide reads, in one-letter code: Demethylmenaquinone methyltransferase (253 aa).

S-adenosyl-L-methionine contacts are provided by residues Thr-75, Asp-96, and 124–125; that span reads DA.

Belongs to the class I-like SAM-binding methyltransferase superfamily. MenG/UbiE family.

The enzyme catalyses a 2-demethylmenaquinol + S-adenosyl-L-methionine = a menaquinol + S-adenosyl-L-homocysteine + H(+). It participates in quinol/quinone metabolism; menaquinone biosynthesis; menaquinol from 1,4-dihydroxy-2-naphthoate: step 2/2. Its function is as follows. Methyltransferase required for the conversion of demethylmenaquinol (DMKH2) to menaquinol (MKH2). The chain is Demethylmenaquinone methyltransferase from Desulfitobacterium hafniense (strain Y51).